Here is a 453-residue protein sequence, read N- to C-terminus: Flap endonuclease 1 (453 aa).

Residues 1–105 (MGIKGLTGLL…SVLAKRFARR (105 aa)) are N-domain. Asp-34 lines the Mg(2+) pocket. 2 residues coordinate DNA: Arg-47 and Arg-71. The Mg(2+) site is built by Asp-87, Glu-159, Glu-161, Asp-180, and Asp-182. Residues 123–254 (DVDKLARRQV…KTALKLMREH (132 aa)) form an I-domain region. Glu-159 is a DNA binding site. The DNA site is built by Gly-232 and Asp-234. Asp-234 is a binding site for Mg(2+). Disordered regions lie at residues 273–336 (EEIK…VASS) and 409–453 (RLDG…KSKN). The segment covering 320–333 (KSPKKKAPAKKKKV) has biased composition (basic residues). Positions 406 to 414 (QQGRLDGFF) are interaction with PCNA. Residues 417-446 (KPKEPAAKDTGKGKGKATKGEKRKAEEKGS) are compositionally biased toward basic and acidic residues.

The protein belongs to the XPG/RAD2 endonuclease family. FEN1 subfamily. Interacts with PCNA. Three molecules of FEN1 bind to one PCNA trimer with each molecule binding to one PCNA monomer. PCNA stimulates the nuclease activity without altering cleavage specificity. It depends on Mg(2+) as a cofactor. In terms of processing, phosphorylated. Phosphorylation upon DNA damage induces relocalization to the nuclear plasma.

Its subcellular location is the nucleus. It localises to the nucleolus. The protein resides in the nucleoplasm. The protein localises to the mitochondrion. Structure-specific nuclease with 5'-flap endonuclease and 5'-3' exonuclease activities involved in DNA replication and repair. During DNA replication, cleaves the 5'-overhanging flap structure that is generated by displacement synthesis when DNA polymerase encounters the 5'-end of a downstream Okazaki fragment. It enters the flap from the 5'-end and then tracks to cleave the flap base, leaving a nick for ligation. Also involved in the long patch base excision repair (LP-BER) pathway, by cleaving within the apurinic/apyrimidinic (AP) site-terminated flap. Acts as a genome stabilization factor that prevents flaps from equilibrating into structures that lead to duplications and deletions. Also possesses 5'-3' exonuclease activity on nicked or gapped double-stranded DNA, and exhibits RNase H activity. Also involved in replication and repair of rDNA and in repairing mitochondrial DNA. The sequence is that of Flap endonuclease 1 from Cryptococcus neoformans var. neoformans serotype D (strain B-3501A) (Filobasidiella neoformans).